The following is a 499-amino-acid chain: Hepatic triacylglycerol lipase (499 aa).

A signal peptide spans 1 to 22 (MDTSPLCFSILLVLCIFIQSSA). Asparagine 42 and asparagine 78 each carry an N-linked (GlcNAc...) asparagine glycan. The active-site Nucleophile is serine 168. Aspartate 194 functions as the Charge relay system in the catalytic mechanism. Positions 254–277 (CHFLELYRHIAQHGFNAITQTIKC) are essential for determining substrate specificity. Histidine 279 serves as the catalytic Charge relay system. The PLAT domain occupies 352-486 (YHYQFKIQFI…RPTQEKIFVK (135 aa)). Residues asparagine 362 and asparagine 397 are each glycosylated (N-linked (GlcNAc...) asparagine).

This sequence belongs to the AB hydrolase superfamily. Lipase family. As to quaternary structure, homodimer.

It localises to the secreted. It catalyses the reaction a triacylglycerol + H2O = a diacylglycerol + a fatty acid + H(+). The catalysed reaction is a 1-acyl-sn-glycero-3-phosphocholine + H2O = sn-glycerol 3-phosphocholine + a fatty acid + H(+). The enzyme catalyses a 1,2-diacyl-sn-glycero-3-phosphocholine + H2O = a 2-acyl-sn-glycero-3-phosphocholine + a fatty acid + H(+). It carries out the reaction 1,2,3-tri-(9Z-octadecenoyl)-glycerol + H2O = di-(9Z)-octadecenoylglycerol + (9Z)-octadecenoate + H(+). It catalyses the reaction 1,2-di-(9Z-octadecenoyl)-sn-glycero-3-phosphocholine + H2O = (9Z-octadecenoyl)-sn-glycero-3-phosphocholine + (9Z)-octadecenoate + H(+). The catalysed reaction is 1,2,3-tributanoylglycerol + H2O = dibutanoylglycerol + butanoate + H(+). The enzyme catalyses 1,2-dihexadecanoyl-sn-glycero-3-phosphocholine + H2O = hexadecanoyl-sn-glycero-3-phosphocholine + hexadecanoate + H(+). It carries out the reaction 1,2-di-(9Z-octadecenoyl)-sn-glycerol + H2O = 2-(9Z-octadecenoyl)-glycerol + (9Z)-octadecenoate + H(+). It catalyses the reaction 1,2,3-tri-(9Z-octadecenoyl)-glycerol + H2O = 2,3-di-(9Z)-octadecenoyl-sn-glycerol + (9Z)-octadecenoate + H(+). The catalysed reaction is 1-(9Z-octadecenoyl)-sn-glycero-3-phospho-L-serine + H2O = sn-glycero-3-phospho-L-serine + (9Z)-octadecenoate + H(+). The enzyme catalyses 1-hexadecanoyl-sn-glycero-3-phosphocholine + H2O = sn-glycerol 3-phosphocholine + hexadecanoate + H(+). It carries out the reaction 1,3-di-(9Z-octadecenoyl)-glycerol + H2O = 3-(9Z-octadecenoyl)-sn-glycerol + (9Z)-octadecenoate + H(+). Phospholipase A1 and triacylglycerol lipase are inhibited by sphingomyelin. Catalyzes the hydrolysis of triglycerides and phospholipids present in circulating plasma lipoproteins, including chylomicrons, intermediate density lipoproteins (IDL), low density lipoproteins (LDL) of large size and high density lipoproteins (HDL), releasing free fatty acids (FFA) and smaller lipoprotein particles. Also exhibits lysophospholipase activity. Can hydrolyze both neutral lipid and phospholipid substrates but shows a greater binding affinity for neutral lipid substrates than phospholipid substrates. In native LDL, preferentially hydrolyzes the phosphatidylcholine species containing polyunsaturated fatty acids at sn-2 position. The polypeptide is Hepatic triacylglycerol lipase (LIPC) (Homo sapiens (Human)).